Reading from the N-terminus, the 466-residue chain is Ribulose bisphosphate carboxylase large chain (466 aa).

An N6,N6,N6-trimethyllysine modification is found at Lys-5. Residues Asn-114 and Thr-164 each contribute to the substrate site. Lys-166 serves as the catalytic Proton acceptor. Lys-168 is a substrate binding site. The Mg(2+) site is built by Lys-192, Asp-194, and Glu-195. Residue Lys-192 is modified to N6-carboxylysine. The Proton acceptor role is filled by His-285. Arg-286, His-318, and Ser-370 together coordinate substrate.

This sequence belongs to the RuBisCO large chain family. Type I subfamily. Heterohexadecamer of 8 large chains and 8 small chains. Mg(2+) serves as cofactor.

It localises to the plastid. It is found in the chloroplast. It carries out the reaction 2 (2R)-3-phosphoglycerate + 2 H(+) = D-ribulose 1,5-bisphosphate + CO2 + H2O. The catalysed reaction is D-ribulose 1,5-bisphosphate + O2 = 2-phosphoglycolate + (2R)-3-phosphoglycerate + 2 H(+). Functionally, ruBisCO catalyzes two reactions: the carboxylation of D-ribulose 1,5-bisphosphate, the primary event in carbon dioxide fixation, as well as the oxidative fragmentation of the pentose substrate in the photorespiration process. Both reactions occur simultaneously and in competition at the same active site. The polypeptide is Ribulose bisphosphate carboxylase large chain (Cornus kousa (Kousa dogwood)).